The chain runs to 181 residues: Ribosome maturation factor RimM (181 aa).

One can recognise a PRC barrel domain in the interval 98 to 177; sequence EGEFFYCDLV…KITTHNAKTL (80 aa).

It belongs to the RimM family. Binds ribosomal protein uS19.

It is found in the cytoplasm. Its function is as follows. An accessory protein needed during the final step in the assembly of 30S ribosomal subunit, possibly for assembly of the head region. Essential for efficient processing of 16S rRNA. May be needed both before and after RbfA during the maturation of 16S rRNA. It has affinity for free ribosomal 30S subunits but not for 70S ribosomes. The chain is Ribosome maturation factor RimM from Helicobacter pylori (strain HPAG1).